A 145-amino-acid polypeptide reads, in one-letter code: [Ribosomal protein bS18]-alanine N-acetyltransferase (145 aa).

In terms of domain architecture, N-acetyltransferase spans 1–145 (MIETIVEQDF…ENAVIMALYL (145 aa)). Residue 67–69 (LAV) coordinates acetyl-CoA. The active-site Proton acceptor is glutamate 101. Asparagine 106 lines the acetyl-CoA pocket. Tyrosine 113 functions as the Proton donor in the catalytic mechanism.

The protein belongs to the acetyltransferase family. RimI subfamily.

It localises to the cytoplasm. The catalysed reaction is N-terminal L-alanyl-[ribosomal protein bS18] + acetyl-CoA = N-terminal N(alpha)-acetyl-L-alanyl-[ribosomal protein bS18] + CoA + H(+). In terms of biological role, acetylates the N-terminal alanine of ribosomal protein bS18. The sequence is that of [Ribosomal protein bS18]-alanine N-acetyltransferase from Haemophilus ducreyi (strain 35000HP / ATCC 700724).